We begin with the raw amino-acid sequence, 179 residues long: Large ribosomal subunit protein uL5 (179 aa).

Belongs to the universal ribosomal protein uL5 family. In terms of assembly, part of the 50S ribosomal subunit; part of the 5S rRNA/L5/L18/L25 subcomplex. Contacts the 5S rRNA and the P site tRNA. Forms a bridge to the 30S subunit in the 70S ribosome.

Its function is as follows. This is one of the proteins that bind and probably mediate the attachment of the 5S RNA into the large ribosomal subunit, where it forms part of the central protuberance. In the 70S ribosome it contacts protein S13 of the 30S subunit (bridge B1b), connecting the 2 subunits; this bridge is implicated in subunit movement. Contacts the P site tRNA; the 5S rRNA and some of its associated proteins might help stabilize positioning of ribosome-bound tRNAs. The protein is Large ribosomal subunit protein uL5 of Staphylococcus epidermidis (strain ATCC 35984 / DSM 28319 / BCRC 17069 / CCUG 31568 / BM 3577 / RP62A).